The following is a 444-amino-acid chain: 23S rRNA (uracil(1939)-C(5))-methyltransferase RlmD (444 aa).

The TRAM domain maps to 5–67 (RNRLDRTPFQ…RHFDEAKTVG (63 aa)). Positions 80, 86, 89, and 168 each coordinate [4Fe-4S] cluster. The S-adenosyl-L-methionine site is built by Q276, F305, N310, E326, D353, and D374. C400 functions as the Nucleophile in the catalytic mechanism.

Belongs to the class I-like SAM-binding methyltransferase superfamily. RNA M5U methyltransferase family. RlmD subfamily.

It carries out the reaction uridine(1939) in 23S rRNA + S-adenosyl-L-methionine = 5-methyluridine(1939) in 23S rRNA + S-adenosyl-L-homocysteine + H(+). Its function is as follows. Catalyzes the formation of 5-methyl-uridine at position 1939 (m5U1939) in 23S rRNA. The protein is 23S rRNA (uracil(1939)-C(5))-methyltransferase RlmD of Xanthomonas axonopodis pv. citri (strain 306).